The sequence spans 537 residues: MLGLTDMLKDGAKHFAGKDEAILRNIDATKQLSEITRTSLGPNGMNKMIINHLEKLFVTNDAATIIRELDVIHPAAKMLVMAAQMQEQEMGDGTNYVVTLTGEFLQKAATLLEMGLHPSEIITGFEKAGAKLQEIIESMIVYNLKDITDKKEVTKCLKSAIASKQYGYEEFLSEIITNACLQVLPKKAVNFNIDNVRVTKIPGGGVTDTSVIKGFVIPMDAEGTIKRMEKAKIAVFTMGIDLGRTETTGKVLITNEDELLQFSKGEEDSIRETITAIANTGVKVIISGSTVSELALHYIERFKIMLVRIQSKFQLRRVCKAIGATPLVKLGAPIPEELGYCDEVLVEEIGSTKCCIFRQNKEESEISTIVVRGSTNNILDDIERAIDDGVNVFKGMCKDGRFLAGAGAFEIEASRKLQAFADATPGLSQYSIRQYAEAFEIIPRTLAETSGHDSSKAISNIYAAHTKGNTNYGLDIESGQPKSVLEMDVLDAFASKLFAIKLATNTANTVLRVDQIIMSKPAGGPKPPKMGPTDADD.

Belongs to the TCP-1 chaperonin family. In terms of assembly, heterooligomeric complex.

Its subcellular location is the cytoplasm. In terms of biological role, molecular chaperone; assists the folding of proteins upon ATP hydrolysis. Known to play a role, in vitro, in the folding of actin and tubulin. This is T-complex protein 1 subunit theta (cct8) from Dictyostelium discoideum (Social amoeba).